The chain runs to 410 residues: Arginine biosynthesis bifunctional protein ArgJ (410 aa).

Residues Thr158, Lys184, Thr195, Glu282, Asn405, and Thr410 each coordinate substrate. Thr195 acts as the Nucleophile in catalysis.

It belongs to the ArgJ family. In terms of assembly, heterotetramer of two alpha and two beta chains.

Its subcellular location is the cytoplasm. It catalyses the reaction N(2)-acetyl-L-ornithine + L-glutamate = N-acetyl-L-glutamate + L-ornithine. The enzyme catalyses L-glutamate + acetyl-CoA = N-acetyl-L-glutamate + CoA + H(+). It functions in the pathway amino-acid biosynthesis; L-arginine biosynthesis; L-ornithine and N-acetyl-L-glutamate from L-glutamate and N(2)-acetyl-L-ornithine (cyclic): step 1/1. The protein operates within amino-acid biosynthesis; L-arginine biosynthesis; N(2)-acetyl-L-ornithine from L-glutamate: step 1/4. Functionally, catalyzes two activities which are involved in the cyclic version of arginine biosynthesis: the synthesis of N-acetylglutamate from glutamate and acetyl-CoA as the acetyl donor, and of ornithine by transacetylation between N(2)-acetylornithine and glutamate. The polypeptide is Arginine biosynthesis bifunctional protein ArgJ (Rhodopirellula baltica (strain DSM 10527 / NCIMB 13988 / SH1)).